The following is a 319-amino-acid chain: HTH-type transcriptional regulator YidZ (319 aa).

One can recognise an HTH lysR-type domain in the interval 8 to 65; the sequence is LDLNLLLCLQLLMQERSVTKAAKRMNVTPSAVSKSLAKLRAWFDDPLFVNSPLGLSPT. Positions 25 to 44 form a DNA-binding region, H-T-H motif; it reads VTKAAKRMNVTPSAVSKSLA.

It belongs to the LysR transcriptional regulatory family.

In terms of biological role, involved in anaerobic NO protection. The chain is HTH-type transcriptional regulator YidZ from Escherichia coli O6:H1 (strain CFT073 / ATCC 700928 / UPEC).